Reading from the N-terminus, the 220-residue chain is CDP-diacylglycerol--inositol 3-phosphatidyltransferase (220 aa).

The Cytoplasmic portion of the chain corresponds to 1-20 (MSSNSTPEKVTAEHVLWYIP). A helical membrane pass occupies residues 21 to 41 (NKIGYVRVITAALSFFVMKNH). Topologically, residues 42-45 (PTAF) are lumenal. Residues 46-66 (TWLYSTSCLLDALDGTMARKY) traverse the membrane as a helical segment. Residues aspartate 56 and aspartate 59 each contribute to the Mg(2+) site. 3 residues coordinate a CDP-1,2-diacyl-sn-glycerol: glycine 60, arginine 64, and serine 70. Topologically, residues 67 to 75 (NQVSSLGAV) are cytoplasmic. Residues 76–96 (LDMVTDRSSTAGLMCFLCVQY) traverse the membrane as a helical segment. Positions 77 and 81 each coordinate Mg(2+). Catalysis depends on aspartate 81, which acts as the Proton acceptor. Topologically, residues 97–98 (PQ) are lumenal. Residues 99–119 (WCVFFQLMLGLDITSHYMHMY) traverse the membrane as a helical segment. Residues 120–145 (ASLSAGKTSHKSVGEGESRLLHLYYT) lie on the Cytoplasmic side of the membrane. The chain crosses the membrane as a helical span at residues 146 to 166 (RRDVLFTICAFNELFYAGLYL). Residues 167–170 (QLFS) are Lumenal-facing. Residues 171–191 (NSATFGKWTTIISFPGYVFKQ) form a helical membrane-spanning segment. Residues 192 to 220 (TANVVQLKRAALILADNDAKNANEKNKTY) are Cytoplasmic-facing.

This sequence belongs to the CDP-alcohol phosphatidyltransferase class-I family. Requires Mn(2+) as cofactor. Mg(2+) serves as cofactor.

It is found in the microsome membrane. The protein localises to the endoplasmic reticulum membrane. It localises to the golgi apparatus membrane. The protein resides in the mitochondrion outer membrane. The catalysed reaction is a CDP-1,2-diacyl-sn-glycerol + myo-inositol = a 1,2-diacyl-sn-glycero-3-phospho-(1D-myo-inositol) + CMP + H(+). In terms of biological role, catalyzes the synthesis of phosphatidylinositol (PtdIns). The polypeptide is CDP-diacylglycerol--inositol 3-phosphatidyltransferase (Saccharomyces cerevisiae (strain ATCC 204508 / S288c) (Baker's yeast)).